Here is a 159-residue protein sequence, read N- to C-terminus: Small ribosomal subunit protein uS7 (159 aa).

It belongs to the universal ribosomal protein uS7 family. As to quaternary structure, part of the 30S ribosomal subunit. Contacts proteins S9 and S11.

Its function is as follows. One of the primary rRNA binding proteins, it binds directly to 16S rRNA where it nucleates assembly of the head domain of the 30S subunit. Is located at the subunit interface close to the decoding center, probably blocks exit of the E-site tRNA. The chain is Small ribosomal subunit protein uS7 from Elusimicrobium minutum (strain Pei191).